The following is a 192-amino-acid chain: Large ribosomal subunit protein bL25 (192 aa).

It belongs to the bacterial ribosomal protein bL25 family. CTC subfamily. Part of the 50S ribosomal subunit; part of the 5S rRNA/L5/L18/L25 subcomplex. Contacts the 5S rRNA. Binds to the 5S rRNA independently of L5 and L18.

Its function is as follows. This is one of the proteins that binds to the 5S RNA in the ribosome where it forms part of the central protuberance. The sequence is that of Large ribosomal subunit protein bL25 from Cytophaga hutchinsonii (strain ATCC 33406 / DSM 1761 / CIP 103989 / NBRC 15051 / NCIMB 9469 / D465).